Consider the following 194-residue polypeptide: Xanthine phosphoribosyltransferase (194 aa).

Positions 20 and 27 each coordinate xanthine. Residue 128-132 (ANGQA) coordinates 5-phospho-alpha-D-ribose 1-diphosphate. Lys-156 provides a ligand contact to xanthine.

The protein belongs to the purine/pyrimidine phosphoribosyltransferase family. Xpt subfamily. In terms of assembly, homodimer.

It localises to the cytoplasm. The enzyme catalyses XMP + diphosphate = xanthine + 5-phospho-alpha-D-ribose 1-diphosphate. It participates in purine metabolism; XMP biosynthesis via salvage pathway; XMP from xanthine: step 1/1. Converts the preformed base xanthine, a product of nucleic acid breakdown, to xanthosine 5'-monophosphate (XMP), so that it can be reused for RNA or DNA synthesis. This Bacillus subtilis (strain 168) protein is Xanthine phosphoribosyltransferase (xpt).